We begin with the raw amino-acid sequence, 341 residues long: D-erythrose-4-phosphate dehydrogenase (341 aa).

NAD(+) is bound at residue 14-15 (RI). Substrate is bound by residues 156–158 (SCT), Arg-202, 215–216 (TR), and Arg-238. Cys-157 acts as the Nucleophile in catalysis. Position 320 (Asn-320) interacts with NAD(+).

Belongs to the glyceraldehyde-3-phosphate dehydrogenase family. Epd subfamily. In terms of assembly, homotetramer.

Its subcellular location is the cytoplasm. The enzyme catalyses D-erythrose 4-phosphate + NAD(+) + H2O = 4-phospho-D-erythronate + NADH + 2 H(+). Its pathway is cofactor biosynthesis; pyridoxine 5'-phosphate biosynthesis; pyridoxine 5'-phosphate from D-erythrose 4-phosphate: step 1/5. In terms of biological role, catalyzes the NAD-dependent conversion of D-erythrose 4-phosphate to 4-phosphoerythronate. In Idiomarina loihiensis (strain ATCC BAA-735 / DSM 15497 / L2-TR), this protein is D-erythrose-4-phosphate dehydrogenase.